The following is a 224-amino-acid chain: Peptidyl-prolyl cis-trans isomerase FKBP3 (224 aa).

A2 is modified (N-acetylalanine). The residue at position 36 (S36) is a Phosphoserine. Residues 87–119 form a disordered region; the sequence is NVKLNEDKPKETKSEETPDEGPPKYTKSVLKKG. Basic and acidic residues predominate over residues 89 to 102; that stretch reads KLNEDKPKETKSEE. K99 carries the post-translational modification N6-acetyllysine. One can recognise a PPIase FKBP-type domain in the interval 128–224; it reads GDVVHCWYTG…IFEVELVDID (97 aa). Position 152 is a phosphoserine (S152). Residue K170 is modified to N6-acetyllysine.

This sequence belongs to the FKBP-type PPIase family.

It localises to the nucleus. It carries out the reaction [protein]-peptidylproline (omega=180) = [protein]-peptidylproline (omega=0). With respect to regulation, inhibited preferentially by rapamycin over FK506. Its function is as follows. FK506- and rapamycin-binding proteins (FKBPs) constitute a family of receptors for the two immunosuppressants which inhibit T-cell proliferation by arresting two distinct cytoplasmic signal transmission pathways. PPIases accelerate the folding of proteins. This Oryctolagus cuniculus (Rabbit) protein is Peptidyl-prolyl cis-trans isomerase FKBP3 (FKBP3).